A 99-amino-acid chain; its full sequence is Acylphosphatase-1 (99 aa).

At alanine 2 the chain carries N-acetylalanine. An Acylphosphatase-like domain is found at serine 9–lysine 99. Residues arginine 24 and asparagine 42 contribute to the active site.

The protein belongs to the acylphosphatase family. In terms of tissue distribution, organ-common type isozyme is found in many different tissues.

It carries out the reaction an acyl phosphate + H2O = a carboxylate + phosphate + H(+). This is Acylphosphatase-1 (ACYP1) from Gallus gallus (Chicken).